The chain runs to 169 residues: Myosin regulatory light chain 11 (169 aa).

Residue Ala-2 is modified to N,N,N-trimethylalanine. Phosphoserine is present on residues Ser-15 and Ser-16. Thr-25 and Thr-35 each carry phosphothreonine. In terms of domain architecture, EF-hand 1 spans 25 to 60 (TQIQEFKEAFTVIDQNRDGIIDKEDLRDTFAAMGRL). Ca(2+) contacts are provided by Asp-38, Asn-40, Asp-42, and Asp-49. Ser-75 is subject to Phosphoserine. EF-hand domains follow at residues 95–130 (DPED…QCDR) and 131–166 (FSQE…GDAK). Residue Thr-101 is modified to Phosphothreonine.

In terms of assembly, myosin is a hexamer of 2 heavy chains and 4 light chains. Expressed in fetal and adult skeletal muscle.

Myosin regulatory subunit that plays an essential role to maintain muscle integrity during early development. Plays a role in muscle contraction. This is Myosin regulatory light chain 11 from Homo sapiens (Human).